Here is a 108-residue protein sequence, read N- to C-terminus: UPF0102 protein Sden_0272 (108 aa).

This sequence belongs to the UPF0102 family.

This Shewanella denitrificans (strain OS217 / ATCC BAA-1090 / DSM 15013) protein is UPF0102 protein Sden_0272.